The chain runs to 258 residues: Type III pantothenate kinase (258 aa).

9-16 (DIGNTSVN) provides a ligand contact to ATP. 110–113 (GADR) is a substrate binding site. Residue Asp112 is the Proton acceptor of the active site. Asp132 serves as a coordination point for K(+). Position 135 (Thr135) interacts with ATP. Residue Thr187 coordinates substrate.

This sequence belongs to the type III pantothenate kinase family. In terms of assembly, homodimer. Requires NH4(+) as cofactor. K(+) is required as a cofactor.

The protein resides in the cytoplasm. It carries out the reaction (R)-pantothenate + ATP = (R)-4'-phosphopantothenate + ADP + H(+). It participates in cofactor biosynthesis; coenzyme A biosynthesis; CoA from (R)-pantothenate: step 1/5. Its function is as follows. Catalyzes the phosphorylation of pantothenate (Pan), the first step in CoA biosynthesis. The protein is Type III pantothenate kinase of Dehalococcoides mccartyi (strain ATCC BAA-2266 / KCTC 15142 / 195) (Dehalococcoides ethenogenes (strain 195)).